Reading from the N-terminus, the 119-residue chain is Large ribosomal subunit protein bL19 (119 aa).

The protein belongs to the bacterial ribosomal protein bL19 family.

In terms of biological role, this protein is located at the 30S-50S ribosomal subunit interface and may play a role in the structure and function of the aminoacyl-tRNA binding site. The polypeptide is Large ribosomal subunit protein bL19 (Idiomarina loihiensis (strain ATCC BAA-735 / DSM 15497 / L2-TR)).